The following is a 146-amino-acid chain: uncharacterized protein (146 aa).

The Glutaredoxin domain maps to 34 to 135 (EDKIVNDVMT…PLLEKAHALF (102 aa)). Cys-54 serves as a coordination point for [2Fe-2S] cluster.

The protein belongs to the glutaredoxin family. Monothiol subfamily.

This is an uncharacterized protein from Caenorhabditis elegans.